The following is a 421-amino-acid chain: Enolase (421 aa).

Q165 contributes to the (2R)-2-phosphoglycerate binding site. E207 serves as the catalytic Proton donor. Mg(2+) is bound by residues D244, E285, and D312. (2R)-2-phosphoglycerate is bound by residues K337, R366, S367, and K388. K337 functions as the Proton acceptor in the catalytic mechanism.

It belongs to the enolase family. Mg(2+) is required as a cofactor.

It is found in the cytoplasm. The protein resides in the secreted. It localises to the cell surface. The catalysed reaction is (2R)-2-phosphoglycerate = phosphoenolpyruvate + H2O. It functions in the pathway carbohydrate degradation; glycolysis; pyruvate from D-glyceraldehyde 3-phosphate: step 4/5. Functionally, catalyzes the reversible conversion of 2-phosphoglycerate (2-PG) into phosphoenolpyruvate (PEP). It is essential for the degradation of carbohydrates via glycolysis. This is Enolase from Ehrlichia ruminantium (strain Welgevonden).